We begin with the raw amino-acid sequence, 1292 residues long: DNA-directed RNA polymerase subunit beta' (1292 aa).

Zn(2+) contacts are provided by cysteine 70, cysteine 72, cysteine 85, and cysteine 88. Residues aspartate 532, aspartate 534, and aspartate 536 each contribute to the Mg(2+) site. Residues cysteine 911, cysteine 987, cysteine 994, and cysteine 997 each contribute to the Zn(2+) site.

Belongs to the RNA polymerase beta' chain family. As to quaternary structure, the RNAP catalytic core consists of 2 alpha, 1 beta, 1 beta' and 1 omega subunit. When a sigma factor is associated with the core the holoenzyme is formed, which can initiate transcription. Requires Mg(2+) as cofactor. The cofactor is Zn(2+).

The enzyme catalyses RNA(n) + a ribonucleoside 5'-triphosphate = RNA(n+1) + diphosphate. Its function is as follows. DNA-dependent RNA polymerase catalyzes the transcription of DNA into RNA using the four ribonucleoside triphosphates as substrates. This Mycoplasma genitalium (strain ATCC 33530 / DSM 19775 / NCTC 10195 / G37) (Mycoplasmoides genitalium) protein is DNA-directed RNA polymerase subunit beta'.